A 305-amino-acid chain; its full sequence is PI-PLC X domain-containing protein 1 (305 aa).

Residues 1–24 form the signal peptide; that stretch reads MSMSTLRHFLWLGALLLATIQVSA. The PI-PLC X-box domain occupies 25–189; it reads LPTAQDLICN…RLIVFVDSKA (165 aa). Residues H53 and H97 contribute to the active site. An N-linked (GlcNAc...) asparagine glycan is attached at N237.

The protein localises to the secreted. The polypeptide is PI-PLC X domain-containing protein 1 (Arthroderma benhamiae (strain ATCC MYA-4681 / CBS 112371) (Trichophyton mentagrophytes)).